Consider the following 539-residue polypeptide: DnaJ homolog subfamily C member 7 homolog (539 aa).

TPR repeat units follow at residues 3–36 (HEEC…SNGT), 75–108 (IKGY…DPRN), 189–222 (PEYL…DPDY), 235–268 (IESK…DPKL), 273–306 (SQLY…DPNY), and 307–340 (GKAY…DPEN). In terms of domain architecture, J spans 361–431 (DYYKILGVSK…KKKRQYDMGQ (71 aa)). The tract at residues 512–539 (MGGGFGGHSGHSHGGSRSRSSRGGNEYR) is disordered. The segment covering 521–531 (GHSHGGSRSRS) has biased composition (basic residues).

This Dictyostelium discoideum (Social amoeba) protein is DnaJ homolog subfamily C member 7 homolog (dnajc7).